The sequence spans 642 residues: Palmitoyltransferase akr1 (642 aa).

ANK repeat units lie at residues 1-29, 33-62, 67-96, 100-129, 133-162, and 166-196; these read MGSLFLAASQGELDTVKNLISSEKIDVNA, GGATALHWAALNQQIPICKFLLEHGADVNA, LQAAPIHWAAKRGSVKTVHYLVQHGADPLL, QGFNCLHLAVHAASPLLVVYLLHLDISVDL, QQHTPLMWASYHGNEPITNCLLRWGADVLA, and DKMTPLHWSIVGGNLKCMKLILKEGGIPCTA. Topologically, residues 1-256 are cytoplasmic; the sequence is MGSLFLAASQ…SKFQFSQKTF (256 aa). The next 2 membrane-spanning stretches (helical) occupy residues 257–277 and 278–298; these read IIFCFLSSFIITGVFFFIMSI and CPMVISLIIAPLWIYFTFKYI. The Cytoplasmic portion of the chain corresponds to 299 to 316; sequence TTCIHANIDIVHFYLETP. Residues 317–337 form a helical membrane-spanning segment; that stretch reads FLAGIFSSIFFWVWCHSLLYI. The Lumenal portion of the chain corresponds to 338–343; the sequence is VPKTLP. A helical transmembrane segment spans residues 344 to 364; it reads IKPLSSLLFVLISFTCIGLYV. Residues 365 to 444 lie on the Cytoplasmic side of the membrane; the sequence is RTAFQNPGYV…NCVGARNHRT (80 aa). The 51-residue stretch at 400 to 450 folds into the DHHC domain; the sequence is HYCLKCFQVKPPRSYHCGACKRCINRYDHHCPWTGNCVGARNHRTFLLFVF. The active-site S-palmitoyl cysteine intermediate is Cys430. Residues 445-465 form a helical membrane-spanning segment; the sequence is FLLFVFTLSTLIPIYFYVAFY. The Lumenal segment spans residues 466–496; it reads YLQNIPIQKKYESYRCLFISGTICQWSLKDM. A helical membrane pass occupies residues 497-517; the sequence is FVLVASLTLFVNWCWVVVLAF. Residues 518 to 642 are Cytoplasmic-facing; that stretch reads TQICQVAHNV…GRQDEATRHV (125 aa).

This sequence belongs to the DHHC palmitoyltransferase family. AKR/ZDHHC17 subfamily.

It localises to the early endosome membrane. The protein localises to the golgi apparatus membrane. The catalysed reaction is L-cysteinyl-[protein] + hexadecanoyl-CoA = S-hexadecanoyl-L-cysteinyl-[protein] + CoA. Palmitoyltransferase specific for casein kinase 1. This Schizosaccharomyces pombe (strain 972 / ATCC 24843) (Fission yeast) protein is Palmitoyltransferase akr1 (akr1).